A 384-amino-acid polypeptide reads, in one-letter code: Mitogen-activated protein kinase homolog 1 (384 aa).

The region spanning 32-319 (YVPIKPIGRG…VMEALQHPYM (288 aa)) is the Protein kinase domain. Residues 38 to 46 (IGRGAYGIV) and Lys61 contribute to the ATP site. The active-site Proton acceptor is the Asp158. Thr191 carries the post-translational modification Phosphothreonine. The TXY signature appears at 191 to 193 (TEY). Tyr193 is modified (phosphotyrosine).

Belongs to the protein kinase superfamily. CMGC Ser/Thr protein kinase family. MAP kinase subfamily. Mg(2+) is required as a cofactor. In terms of processing, dually phosphorylated on Thr-191 and Tyr-193, which activates the enzyme. As to expression, expressed in vegetative organs such as leaf, root, or stem. In the reproductive organs, it is found in the ovary, but not in the stamen.

The catalysed reaction is L-seryl-[protein] + ATP = O-phospho-L-seryl-[protein] + ADP + H(+). The enzyme catalyses L-threonyl-[protein] + ATP = O-phospho-L-threonyl-[protein] + ADP + H(+). Activated by tyrosine and threonine phosphorylation. The protein is Mitogen-activated protein kinase homolog 1 (MPK1) of Petunia hybrida (Petunia).